The primary structure comprises 477 residues: Glycogen synthase (477 aa).

Lysine 15 is an ADP-alpha-D-glucose binding site.

The protein belongs to the glycosyltransferase 1 family. Bacterial/plant glycogen synthase subfamily.

It catalyses the reaction [(1-&gt;4)-alpha-D-glucosyl](n) + ADP-alpha-D-glucose = [(1-&gt;4)-alpha-D-glucosyl](n+1) + ADP + H(+). It participates in glycan biosynthesis; glycogen biosynthesis. Its function is as follows. Synthesizes alpha-1,4-glucan chains using ADP-glucose. This chain is Glycogen synthase, found in Mannheimia succiniciproducens (strain KCTC 0769BP / MBEL55E).